We begin with the raw amino-acid sequence, 376 residues long: Cytochrome b (376 aa).

A run of 4 helical transmembrane segments spans residues 28-48, 72-94, 107-127, and 169-189; these read YGFLLGIIFFIQILTGVFLAS, WCFRYMHATGASLVFFLTYLHIL, SWISGLIIFALFIVTAFIGYV, and FFVLHFILPFVALCIVFIHIF. Heme b-binding residues include histidine 78 and histidine 92. Residues histidine 173 and histidine 187 each contribute to the heme b site. An a ubiquinone-binding site is contributed by histidine 192. Transmembrane regions (helical) follow at residues 214-234, 274-294, 317-337, and 340-360; these read LLSLDVKGFNNILILFLIQSI, IPSKNAGLVIVVASLQLLFLL, VPIIWFMCSFYALLWIGCQLP, and IFILYGRLFIILFFSSGLFAL.

The protein belongs to the cytochrome b family. As to quaternary structure, the main subunits of complex b-c1 are: cytochrome b, cytochrome c1 and the Rieske protein. The cofactor is heme b.

It is found in the mitochondrion inner membrane. Component of the ubiquinol-cytochrome c reductase complex (complex III or cytochrome b-c1 complex) that is part of the mitochondrial respiratory chain. The b-c1 complex mediates electron transfer from ubiquinol to cytochrome c. Contributes to the generation of a proton gradient across the mitochondrial membrane that is then used for ATP synthesis. This is Cytochrome b (MT-CYB) from Plasmodium chabaudi.